Here is a 324-residue protein sequence, read N- to C-terminus: DNA primase small subunit PriS (324 aa).

Catalysis depends on residues Asp94, Asp96, and Asp274.

The protein belongs to the eukaryotic-type primase small subunit family. Heterodimer of a small subunit (PriS) and a large subunit (PriL). Requires Mg(2+) as cofactor. Mn(2+) serves as cofactor.

In terms of biological role, catalytic subunit of DNA primase, an RNA polymerase that catalyzes the synthesis of short RNA molecules used as primers for DNA polymerase during DNA replication. The small subunit contains the primase catalytic core and has DNA synthesis activity on its own. Binding to the large subunit stabilizes and modulates the activity, increasing the rate of DNA synthesis while decreasing the length of the DNA fragments, and conferring RNA synthesis capability. The DNA polymerase activity may enable DNA primase to also catalyze primer extension after primer synthesis. May also play a role in DNA repair. The protein is DNA primase small subunit PriS of Methanobrevibacter smithii (strain ATCC 35061 / DSM 861 / OCM 144 / PS).